The primary structure comprises 210 residues: Thymidylate kinase (210 aa).

ATP is bound at residue 10–17 (GPEGAGKS).

The protein belongs to the thymidylate kinase family.

The catalysed reaction is dTMP + ATP = dTDP + ADP. Its function is as follows. Phosphorylation of dTMP to form dTDP in both de novo and salvage pathways of dTTP synthesis. The chain is Thymidylate kinase from Pseudomonas fluorescens (strain SBW25).